Consider the following 211-residue polypeptide: MDAPGAPAPAAAPSSARKELKIVIVGDGGCGKTSLLMVYCQGSFPEHYAPSVFEKYTASVTVGNKEVTLNLYDTAGQEDYDRLRPLSYQNTHLVLICYDVMNPTSYDNVLIKWFPEVTHFCRGIPTVLIGCKTDLRKDKEQLRKLRAAQLEPITYTQGLNACEQMRGALYLECSAKFRENVEDVFREAAKVALSALKKAQRQKKHRICLLL.

Methionine 1 bears the N-acetylmethionine mark. GTP is bound at residue 26–33 (GDGGCGKT). The short motif at 48–56 (YAPSVFEKY) is the Effector region element. Residues 73–77 (DTAGQ) and 131–134 (CKTD) contribute to the GTP site. Position 208 is a cysteine methyl ester (cysteine 208). Cysteine 208 carries S-geranylgeranyl cysteine lipidation. The propeptide at 209-211 (LLL) is removed in mature form.

The protein belongs to the small GTPase superfamily. Rho family.

It is found in the cell membrane. Its subcellular location is the cytoplasm. The protein resides in the cytoskeleton. In terms of biological role, plasma membrane-associated small GTPase which cycles between an active GTP-bound and an inactive GDP-bound state. Causes the formation of thin, actin-rich surface projections called filopodia. Functions cooperatively with CDC42 and Rac to generate additional structures, increasing the diversity of actin-based morphology. In Mus musculus (Mouse), this protein is Rho-related GTP-binding protein RhoF (Rhof).